We begin with the raw amino-acid sequence, 365 residues long: Putative chalcone synthase (365 aa).

C144 is a catalytic residue.

This sequence belongs to the thiolase-like superfamily. Chalcone/stilbene synthases family.

It catalyses the reaction (E)-4-coumaroyl-CoA + 3 malonyl-CoA + 3 H(+) = 2',4,4',6'-tetrahydroxychalcone + 3 CO2 + 4 CoA. This chain is Putative chalcone synthase (bcsA), found in Bacillus subtilis (strain 168).